Reading from the N-terminus, the 96-residue chain is Transcription and mRNA export factor SUS1 (96 aa).

Belongs to the ENY2 family. As to quaternary structure, component of the nuclear pore complex (NPC)-associated TREX-2 complex (transcription and export complex 2), composed of at least SUS1, SAC3, THP1, SEM1, and CDC31. TREX-2 contains 2 SUS1 chains. The TREX-2 complex interacts with the nucleoporin NUP1. Component of the 1.8 MDa SAGA transcription coactivator-HAT complex. SAGA is built of 5 distinct domains with specialized functions. Within the SAGA complex, SUS1, SGF11, SGF73 and UBP8 form an additional subcomplex of SAGA called the DUB module (deubiquitination module). Interacts directly with THP1, SAC3, SGF11, and with the RNA polymerase II.

Its subcellular location is the nucleus. It localises to the nucleoplasm. It is found in the cytoplasm. The protein resides in the P-body. Its function is as follows. Involved in mRNA export coupled transcription activation by association with both the TREX-2 and the SAGA complexes. At the promoters, SAGA is required for recruitment of the basal transcription machinery. It influences RNA polymerase II transcriptional activity through different activities such as TBP interaction and promoter selectivity, interaction with transcription activators, and chromatin modification through histone acetylation and deubiquitination. Within the SAGA complex, participates in a subcomplex required for deubiquitination of H2B and for the maintenance of steady-state H3 methylation levels. The TREX-2 complex functions in docking export-competent ribonucleoprotein particles (mRNPs) to the nuclear entrance of the nuclear pore complex (nuclear basket). TREX-2 participates in mRNA export and accurate chromatin positioning in the nucleus by tethering genes to the nuclear periphery. May also be involved in cytoplasmic mRNA decay by interaction with components of P-bodies. This Kluyveromyces lactis (strain ATCC 8585 / CBS 2359 / DSM 70799 / NBRC 1267 / NRRL Y-1140 / WM37) (Yeast) protein is Transcription and mRNA export factor SUS1.